The sequence spans 151 residues: Putative pre-16S rRNA nuclease (151 aa).

This sequence belongs to the YqgF nuclease family.

It is found in the cytoplasm. Could be a nuclease involved in processing of the 5'-end of pre-16S rRNA. The sequence is that of Putative pre-16S rRNA nuclease from Paraburkholderia phymatum (strain DSM 17167 / CIP 108236 / LMG 21445 / STM815) (Burkholderia phymatum).